The sequence spans 70 residues: DNA-directed RNA polymerase subunit epsilon (70 aa).

It belongs to the RNA polymerase subunit epsilon family. RNAP is composed of a core of 2 alpha, a beta and a beta' subunit. The core is associated with a delta subunit, and at least one of epsilon or omega. When a sigma factor is associated with the core the holoenzyme is formed, which can initiate transcription.

It carries out the reaction RNA(n) + a ribonucleoside 5'-triphosphate = RNA(n+1) + diphosphate. Functionally, a non-essential component of RNA polymerase (RNAP). The sequence is that of DNA-directed RNA polymerase subunit epsilon from Latilactobacillus sakei subsp. sakei (strain 23K) (Lactobacillus sakei subsp. sakei).